The chain runs to 330 residues: Succinylglutamate desuccinylase (330 aa).

Positions 53, 56, and 147 each coordinate Zn(2+). Residue glutamate 210 is part of the active site.

This sequence belongs to the AspA/AstE family. Succinylglutamate desuccinylase subfamily. It depends on Zn(2+) as a cofactor.

It carries out the reaction N-succinyl-L-glutamate + H2O = L-glutamate + succinate. It participates in amino-acid degradation; L-arginine degradation via AST pathway; L-glutamate and succinate from L-arginine: step 5/5. In terms of biological role, transforms N(2)-succinylglutamate into succinate and glutamate. This Yersinia enterocolitica serotype O:8 / biotype 1B (strain NCTC 13174 / 8081) protein is Succinylglutamate desuccinylase.